The primary structure comprises 247 residues: RNA-free ribonuclease P (247 aa).

Belongs to the HARP family.

It carries out the reaction Endonucleolytic cleavage of RNA, removing 5'-extranucleotides from tRNA precursor.. Its function is as follows. RNA-free RNase P that catalyzes the removal of the 5'-leader sequence from pre-tRNA to produce the mature 5'-terminus. This is RNA-free ribonuclease P from Methanosarcina mazei (strain ATCC BAA-159 / DSM 3647 / Goe1 / Go1 / JCM 11833 / OCM 88) (Methanosarcina frisia).